Here is a 278-residue protein sequence, read N- to C-terminus: Large ribosomal subunit protein uL24m (278 aa).

Residues 109–142 (FFPGDLVQVMVGKDKGRQGLVLTTSRDSSDVIVD) enclose the KOW domain.

The protein belongs to the universal ribosomal protein uL24 family.

It is found in the mitochondrion. The sequence is that of Large ribosomal subunit protein uL24m (mrpl-24) from Caenorhabditis elegans.